The following is a 507-amino-acid chain: tRNA-2-methylthio-N(6)-dimethylallyladenosine synthase (507 aa).

An MTTase N-terminal domain is found at 13–129 (RTYQVRTYGC…LPALLERARH (117 aa)). Cys22, Cys58, Cys92, Cys166, Cys170, and Cys173 together coordinate [4Fe-4S] cluster. A Radical SAM core domain is found at 152–388 (RESAYAAWVS…IALQESVTLE (237 aa)). The TRAM domain occupies 391–462 (QKQIGRMIEV…PHHLIADDGV (72 aa)). Over residues 459–478 (DDGVRSHRRTRAGDAHEAGK) the composition is skewed to basic and acidic residues. Residues 459 to 492 (DDGVRSHRRTRAGDAHEAGKKPSTPGIGLGMPAI) form a disordered region.

Belongs to the methylthiotransferase family. MiaB subfamily. As to quaternary structure, monomer. It depends on [4Fe-4S] cluster as a cofactor.

Its subcellular location is the cytoplasm. It carries out the reaction N(6)-dimethylallyladenosine(37) in tRNA + (sulfur carrier)-SH + AH2 + 2 S-adenosyl-L-methionine = 2-methylsulfanyl-N(6)-dimethylallyladenosine(37) in tRNA + (sulfur carrier)-H + 5'-deoxyadenosine + L-methionine + A + S-adenosyl-L-homocysteine + 2 H(+). In terms of biological role, catalyzes the methylthiolation of N6-(dimethylallyl)adenosine (i(6)A), leading to the formation of 2-methylthio-N6-(dimethylallyl)adenosine (ms(2)i(6)A) at position 37 in tRNAs that read codons beginning with uridine. In Mycobacteroides abscessus (strain ATCC 19977 / DSM 44196 / CCUG 20993 / CIP 104536 / JCM 13569 / NCTC 13031 / TMC 1543 / L948) (Mycobacterium abscessus), this protein is tRNA-2-methylthio-N(6)-dimethylallyladenosine synthase.